A 685-amino-acid polypeptide reads, in one-letter code: MSYASLSVKDLTSLVSRSGTGSSSSLKPPGQTRPVKVIPLQHPDTSNEARPPSIPFDDIFSGWTAKIKRMRLVDWIDTLFPCFRWIRTYRWSEYFKLDLMAGITVGIMLVPQAMSYAKLAGLPPIYGLYSSFVPVFVYAIFGSSRQLAIGPVALVSLLVSNALGGIADTNEELHIELAILLALLVGILECIMGLLRLGWLIRFISHSVISGFTSASAIVIGLSQIKYFLGYSIARSSKIVPIVESIIAGADKFQWPPFVMGSLILVILQVMKHVGKAKKELQFLRAAAPLTGIVLGTTIAKVFHPPSISLVGEIPQGLPTFSFPRSFDHAKTLLPTSALITGVAILESVGIAKALAAKNRYELDSNSELFGLGVANILGSLFSAYPATGSFSRSAVNNESEAKTGLSGLITGIIIGCSLLFLTPMFKYIPQCALAAIVISAVSGLVDYDEAIFLWRVDKRDFSLWTITSTITLFFGIEIGVLVGVGFSLAFVIHESANPHIAVLGRLPGTTVYRNIKQYPEAYTYNGIVIVRIDSPIYFANISYIKDRLREYEVAVDKYTNRGLEVDRINFVILEMSPVTHIDSSAVEALKELYQEYKTRDIQLAISNPNKDVHLTIARSGMVELVGKEWFFVRVHDAVQVCLQYVQSSNLEDKHLSFTRRYGGSNNNSSSSNALLKEPLLSVEK.

A chloroplast-targeting transit peptide spans 1-23; the sequence is MSYASLSVKDLTSLVSRSGTGSS. Positions 15-26 are enriched in low complexity; sequence VSRSGTGSSSSL. The interval 15–53 is disordered; it reads VSRSGTGSSSSLKPPGQTRPVKVIPLQHPDTSNEARPPS. 12 helical membrane-spanning segments follow: residues 97 to 117, 122 to 142, 147 to 167, 175 to 195, 203 to 223, 255 to 275, 283 to 303, 332 to 352, 369 to 389, 406 to 426, 434 to 454, and 473 to 493; these read LDLMAGITVGIMLVPQAMSYA, LPPIYGLYSSFVPVFVYAIFG, LAIGPVALVSLLVSNALGGIA, IELAILLALLVGILECIMGLL, FISHSVISGFTSASAIVIGLS, WPPFVMGSLILVILQVMKHVG, FLRAAAPLTGIVLGTTIAKVF, TLLPTSALITGVAILESVGIA, LFGLGVANILGSLFSAYPATG, LSGLITGIIIGCSLLFLTPMF, LAAIVISAVSGLVDYDEAIFL, and LFFGIEIGVLVGVGFSLAFVI. The STAS domain occupies 518–642; that stretch reads QYPEAYTYNG…VRVHDAVQVC (125 aa).

Belongs to the SLC26A/SulP transporter (TC 2.A.53) family. As to expression, expressed both in roots and leaves.

The protein resides in the plastid. The protein localises to the chloroplast membrane. H(+)/sulfate cotransporter that may play a role in the regulation of sulfate assimilation. This Arabidopsis thaliana (Mouse-ear cress) protein is Sulfate transporter 4.1, chloroplastic (SULTR4;1).